Reading from the N-terminus, the 179-residue chain is uncharacterized protein (179 aa).

Helical transmembrane passes span 9 to 31 (WILV…VSTL), 41 to 63 (AFLL…YGSF), 114 to 136 (AYYG…LLGA), and 146 to 168 (AFWG…NYLM).

The protein localises to the cell membrane. This is an uncharacterized protein from Aquifex aeolicus (strain VF5).